A 317-amino-acid polypeptide reads, in one-letter code: L-lactate dehydrogenase 1 (317 aa).

Residues V17, D38, K43, Y69, and 83 to 84 (GA) contribute to the NAD(+) site. The substrate site is built by Q86 and R92. NAD(+) contacts are provided by residues S105, 122–124 (ATN), and S147. Position 124-127 (124-127 (NPVD)) interacts with substrate. 152–155 (DSAR) is a binding site for substrate. H179 (proton acceptor) is an active-site residue. Position 223 is a phosphotyrosine (Y223). A substrate-binding site is contributed by T232.

This sequence belongs to the LDH/MDH superfamily. LDH family. Homotetramer.

Its subcellular location is the cytoplasm. The enzyme catalyses (S)-lactate + NAD(+) = pyruvate + NADH + H(+). The protein operates within fermentation; pyruvate fermentation to lactate; (S)-lactate from pyruvate: step 1/1. Functionally, catalyzes the conversion of lactate to pyruvate (Potential). Appears to be the primary factor that allows S.aureus growth during nitrosative stress in both aerobically and anaerobically cultured cells. This is L-lactate dehydrogenase 1 from Staphylococcus aureus (strain bovine RF122 / ET3-1).